Consider the following 255-residue polypeptide: NAP1-related protein 2 (255 aa).

A coiled-coil region spans residues 19-60 (IDAELVLSIEKLQEIQDDLEKINEKASDEVLEVEQKYNVIRK). The interval 213–255 (NPLTYFNNDADEEDFDGDDDGDEEEKEGDSDEDDDEEDEVGEE) is disordered. Positions 221 to 255 (DADEEDFDGDDDGDEEEKEGDSDEDDDEEDEVGEE) are enriched in acidic residues.

The protein belongs to the nucleosome assembly protein (NAP) family. As to quaternary structure, can form homomeric and heteromeric protein complexes with NRP1. Binds histones H2A and H2B and associates with chromatin in vivo. In terms of tissue distribution, ubiquitous.

The protein resides in the cytoplasm. It localises to the nucleus. Acts as a histone H2A/H2B chaperone in nucleosome assembly, playing a critical role for the correct expression of genes involved in root proliferation and patterning. Required with NRP1 for the maintenance of cell proliferation and differentiation in postembryonic root growth. Involved in both intramolecular and intermolecular somatic homologous recombination. The protein is NAP1-related protein 2 (NRP2) of Arabidopsis thaliana (Mouse-ear cress).